A 450-amino-acid polypeptide reads, in one-letter code: Cysteine proteinase (450 aa).

The N-terminal stretch at 1-20 is a signal peptide; sequence MPRTEMVRFVRLPVVLLAMA. Residues 21 to 125 constitute a propeptide, activation peptide; that stretch reads ACLASVALGS…RKTVNVTTGR (105 aa). The N-linked (GlcNAc...) asparagine glycan is linked to Asn120. Residues Cys147 and Cys188 are joined by a disulfide bond. Catalysis depends on residues Cys150, His287, and Asn307. The tract at residues 343–450 is 108-residue extension; the sequence is TPPPPPPPPP…TKAARLVPHQ (108 aa). Asn397 is a glycosylation site (N-linked (GlcNAc...) asparagine).

Belongs to the peptidase C1 family.

It localises to the lysosome. Functionally, the cysteine proteinases have a potential role in host-parasite interaction and virulence. The chain is Cysteine proteinase from Trypanosoma brucei brucei.